Reading from the N-terminus, the 195-residue chain is 3-isopropylmalate dehydratase small subunit (195 aa).

The protein belongs to the LeuD family. LeuD type 1 subfamily. In terms of assembly, heterodimer of LeuC and LeuD.

The enzyme catalyses (2R,3S)-3-isopropylmalate = (2S)-2-isopropylmalate. The protein operates within amino-acid biosynthesis; L-leucine biosynthesis; L-leucine from 3-methyl-2-oxobutanoate: step 2/4. Functionally, catalyzes the isomerization between 2-isopropylmalate and 3-isopropylmalate, via the formation of 2-isopropylmaleate. This is 3-isopropylmalate dehydratase small subunit from Salinispora tropica (strain ATCC BAA-916 / DSM 44818 / JCM 13857 / NBRC 105044 / CNB-440).